The chain runs to 185 residues: Nucleoside triphosphate pyrophosphatase (185 aa).

The active-site Proton acceptor is Asp-70.

It belongs to the Maf family. A divalent metal cation serves as cofactor.

The protein resides in the cytoplasm. It catalyses the reaction a ribonucleoside 5'-triphosphate + H2O = a ribonucleoside 5'-phosphate + diphosphate + H(+). It carries out the reaction a 2'-deoxyribonucleoside 5'-triphosphate + H2O = a 2'-deoxyribonucleoside 5'-phosphate + diphosphate + H(+). Nucleoside triphosphate pyrophosphatase. May have a dual role in cell division arrest and in preventing the incorporation of modified nucleotides into cellular nucleic acids. This chain is Nucleoside triphosphate pyrophosphatase, found in Nitratiruptor sp. (strain SB155-2).